The sequence spans 392 residues: Xylose operon regulatory protein (392 aa).

The 99-residue stretch at 288 to 386 folds into the HTH araC/xylS-type domain; the sequence is IQAMHYIRNH…DTTPKEYRDV (99 aa). 2 consecutive DNA-binding regions (H-T-H motif) follow at residues 305–326 and 353–376; these read DQVL…KEEV and INEI…KKAY.

In terms of biological role, regulatory protein for the xylBAFGHR operon. The sequence is that of Xylose operon regulatory protein (xylR) from Escherichia coli O157:H7.